A 501-amino-acid chain; its full sequence is V-type proton ATPase subunit B 2 (501 aa).

Arg392 contacts ATP.

The protein belongs to the ATPase alpha/beta chains family. As to quaternary structure, V-ATPase is a heteromultimeric enzyme made up of two complexes: the ATP-hydrolytic V1 complex and the proton translocation V0 complex. The V1 complex consists of three catalytic AB heterodimers that form a heterohexamer, three peripheral stalks each consisting of EG heterodimers, one central rotor including subunits D and F, and the regulatory subunits C and H. The proton translocation complex V0 consists of the proton transport subunit a, a ring of proteolipid subunits c9c'', rotary subunit d, subunits e and f, and the accessory subunits vah-19/Ac45 and vah-20/PRR. In terms of tissue distribution, predominantly expressed in male and hermaphrodite testis (at protein level).

It localises to the cytoplasm. Non-catalytic subunit of the V1 complex of vacuolar(H+)-ATPase (V-ATPase), a multisubunit enzyme composed of a peripheral complex (V1) that hydrolyzes ATP and a membrane integral complex (V0) that translocates protons. V-ATPase is responsible for acidifying and maintaining the pH of intracellular compartments and in some cell types, is targeted to the plasma membrane, where it is responsible for acidifying the extracellular environment. In neurons, required for necrotic cell death probably by promoting intracellular acidification. Required for spermatogenesis where it regulates the fibrous body-membranous organelle (FBMO) morphology in spermatocytes and the acidification of FBMO-derived secretory membranous organelles (MOs) as spermatids mature. In Caenorhabditis elegans, this protein is V-type proton ATPase subunit B 2.